We begin with the raw amino-acid sequence, 117 residues long: Large ribosomal subunit protein uL24 (117 aa).

The protein belongs to the universal ribosomal protein uL24 family. As to quaternary structure, part of the 50S ribosomal subunit.

Functionally, one of two assembly initiator proteins, it binds directly to the 5'-end of the 23S rRNA, where it nucleates assembly of the 50S subunit. In terms of biological role, one of the proteins that surrounds the polypeptide exit tunnel on the outside of the subunit. This chain is Large ribosomal subunit protein uL24, found in Trichormus variabilis (strain ATCC 29413 / PCC 7937) (Anabaena variabilis).